The following is a 180-amino-acid chain: Large ribosomal subunit protein uL6 (180 aa).

This sequence belongs to the universal ribosomal protein uL6 family. Part of the 50S ribosomal subunit.

This protein binds to the 23S rRNA, and is important in its secondary structure. It is located near the subunit interface in the base of the L7/L12 stalk, and near the tRNA binding site of the peptidyltransferase center. The protein is Large ribosomal subunit protein uL6 of Clostridium botulinum (strain Langeland / NCTC 10281 / Type F).